A 173-amino-acid polypeptide reads, in one-letter code: Co-chaperone protein HscB homolog (173 aa).

The J domain occupies 5–77; sequence CHFALFDLQP…SQRARYLLAL (73 aa).

It belongs to the HscB family. In terms of assembly, interacts with HscA and stimulates its ATPase activity.

Functionally, co-chaperone involved in the maturation of iron-sulfur cluster-containing proteins. Seems to help targeting proteins to be folded toward HscA. This Ectopseudomonas mendocina (strain ymp) (Pseudomonas mendocina) protein is Co-chaperone protein HscB homolog.